The chain runs to 255 residues: Small ribosomal subunit protein uS2 (255 aa).

Positions 232-255 (ASGRDIGASEEAPIEPALEDEAGA) are disordered.

Belongs to the universal ribosomal protein uS2 family.

The polypeptide is Small ribosomal subunit protein uS2 (Agrobacterium fabrum (strain C58 / ATCC 33970) (Agrobacterium tumefaciens (strain C58))).